We begin with the raw amino-acid sequence, 266 residues long: Ribonuclease 3 (266 aa).

Residues 8–130 (LARLTKKLGY…IIGAVYLDSN (123 aa)) enclose the RNase III domain. Residue glutamate 43 participates in Mg(2+) binding. Aspartate 47 is a catalytic residue. Aspartate 116 and glutamate 119 together coordinate Mg(2+). The active site involves glutamate 119. One can recognise a DRBM domain in the interval 157–227 (DPKTRLQEFL…AQQILALIEK (71 aa)). The segment at 229-266 (REQEKEVKIKPTKQAKLANPRHTKSNPSSSSKKSSTRK) is disordered. Low complexity predominate over residues 253–266 (SNPSSSSKKSSTRK).

It belongs to the ribonuclease III family. As to quaternary structure, homodimer. Requires Mg(2+) as cofactor.

Its subcellular location is the cytoplasm. It catalyses the reaction Endonucleolytic cleavage to 5'-phosphomonoester.. Functionally, digests double-stranded RNA. Involved in the processing of primary rRNA transcript to yield the immediate precursors to the large and small rRNAs (23S and 16S). Processes some mRNAs, and tRNAs when they are encoded in the rRNA operon. Processes pre-crRNA and tracrRNA of type II CRISPR loci if present in the organism. This chain is Ribonuclease 3, found in Colwellia psychrerythraea (strain 34H / ATCC BAA-681) (Vibrio psychroerythus).